A 466-amino-acid polypeptide reads, in one-letter code: Alpha-galacturonidase (466 aa).

An NAD(+)-binding site is contributed by 11 to 78 (VKIAYIGGGS…GKWNYETANT (68 aa)). Residue N157 coordinates substrate. C179 lines the Mn(2+) pocket. H180 functions as the Proton donor in the catalytic mechanism. H216 provides a ligand contact to Mn(2+).

It belongs to the glycosyl hydrolase 4 family. In terms of assembly, homotetramer. NAD(+) serves as cofactor. The cofactor is Mn(2+).

The enzyme catalyses [(1-&gt;4)-alpha-D-galacturonosyl](n) + H2O = alpha-D-galacturonate + [(1-&gt;4)-alpha-D-galacturonosyl](n-1). Its function is as follows. Alpha-galacturonidase able to catalyze the hydrolysis of the chromogenic substrate p-nitrophenyl-alpha-D-galacturonic acid (pNPalphaGalUA). It is probable that alpha-1,4-di-galacturonate (GalUA(2)) is the naturally occurring substrate. The protein is Alpha-galacturonidase of Lachnoclostridium phytofermentans (strain ATCC 700394 / DSM 18823 / ISDg) (Clostridium phytofermentans).